Consider the following 536-residue polypeptide: MKQMSYVTRWLYSTSHKDIGMTYLGFGMLSAMMGTGMSVMMRMELSNGNSQFFHGNNQAFNVMMSGHALLMMFFFIMPVWMGAFGNFFLPMLMGAADMAFARLNNISFWCLPPALVCMVCSVLMEQGAGTGFTTYPPLSSMSAHSGPSVDLAMFAMHLTSMSSLLGAMNFMVTVLNMRTMGLHMVNMPLFAWAMFLTAMLLLLSLPVLTAAVTLLLMDRNFNTGFYEVGAGGDPVTYEHLFWFFGHPEVYILMMPGFGVMSHMVSTYSKKPMFGEMGMLYAMGSIGFLGFLVWSHHMFVVGLDIDSRAYFTSATMVIAVPTGIKIFSWLATIYGGELRLGVPMLFALGFLFLFTMGGLTGVMTSNASMDVAFHDTYYVVGHFHYVLSMGALFSLMGAYYYWGPAMFGLKYNRMLGEMHFWLLFMSVNVMFLPMHFLGLNGMPRRMPQYPDAFMGWNYMSSMGSAMSVMSVLVGLKSVLVQLENGENEELEMQVTPDFTESNLNREIRDSDLDLILTRPAEYHTYSELPVLTSNSHA.

Residues 19 to 39 (IGMTYLGFGMLSAMMGTGMSV) traverse the membrane as a helical segment. Ca(2+) is bound at residue Glu-44. His-67 lines the Fe(II)-heme a pocket. The next 6 helical transmembrane spans lie at 69–89 (LLMM…NFFL), 103–123 (LNNI…CSVL), 152–172 (AMFA…NFMV), 188–208 (PLFA…LPVL), 240–260 (LFWF…FGVM), and 273–293 (FGEM…FLVW). Position 246 (His-246) interacts with Cu cation. A cross-link (1'-histidyl-3'-tyrosine (His-Tyr)) is located at residues 246–250 (HPEVY). An O2-binding site is contributed by Tyr-250. Positions 295 and 296 each coordinate Cu cation. Transmembrane regions (helical) follow at residues 315 to 335 (MVIA…IYGG) and 341 to 361 (VPML…LTGV). Residues His-373 and Asp-374 each coordinate Mg(2+). Residue His-381 participates in heme a3 binding. His-383 is a binding site for Fe(II)-heme a. Helical transmembrane passes span 388–408 (MGAL…MFGL) and 418–438 (HFWL…FLGL). Pro-446 provides a ligand contact to Ca(2+). A helical transmembrane segment spans residues 461-481 (MGSAMSVMSVLVGLKSVLVQL).

This sequence belongs to the heme-copper respiratory oxidase family. As to quaternary structure, component of the cytochrome c oxidase (complex IV, CIV), a multisubunit enzyme composed of a catalytic core of 3 subunits and several supernumerary subunits. The complex exists as a monomer or a dimer and forms supercomplexes (SCs) in the inner mitochondrial membrane with ubiquinol-cytochrome c oxidoreductase (cytochrome b-c1 complex, complex III, CIII). Heme is required as a cofactor. Requires Cu cation as cofactor.

It is found in the mitochondrion inner membrane. The catalysed reaction is 4 Fe(II)-[cytochrome c] + O2 + 8 H(+)(in) = 4 Fe(III)-[cytochrome c] + 2 H2O + 4 H(+)(out). The protein operates within energy metabolism; oxidative phosphorylation. Functionally, component of the cytochrome c oxidase, the last enzyme in the mitochondrial electron transport chain which drives oxidative phosphorylation. The respiratory chain contains 3 multisubunit complexes succinate dehydrogenase (complex II, CII), ubiquinol-cytochrome c oxidoreductase (cytochrome b-c1 complex, complex III, CIII) and cytochrome c oxidase (complex IV, CIV), that cooperate to transfer electrons derived from NADH and succinate to molecular oxygen, creating an electrochemical gradient over the inner membrane that drives transmembrane transport and the ATP synthase. Cytochrome c oxidase is the component of the respiratory chain that catalyzes the reduction of oxygen to water. Electrons originating from reduced cytochrome c in the intermembrane space (IMS) are transferred via the dinuclear copper A center (CU(A)) of subunit 2 and heme A of subunit 1 to the active site in subunit 1, a binuclear center (BNC) formed by heme A3 and copper B (CU(B)). The BNC reduces molecular oxygen to 2 water molecules using 4 electrons from cytochrome c in the IMS and 4 protons from the mitochondrial matrix. This Debaryomyces hansenii (strain ATCC 36239 / CBS 767 / BCRC 21394 / JCM 1990 / NBRC 0083 / IGC 2968) (Yeast) protein is Cytochrome c oxidase subunit 1 (COX1).